Consider the following 495-residue polypeptide: Rho GTPase-activating protein 19 (495 aa).

Positions 98 to 304 (MSLKRKEKGV…FMIKHSQKLF (207 aa)) constitute a Rho-GAP domain. Disordered stretches follow at residues 327–362 (KDDL…ETQQ) and 393–495 (KHPS…SSSL). Composition is skewed to basic and acidic residues over residues 350 to 362 (SRLD…ETQQ), 433 to 452 (QERK…KENV), and 470 to 481 (KSLEGQKEESCR).

Functionally, GTPase activator for the Rho-type GTPases by converting them to an inactive GDP-bound state. The polypeptide is Rho GTPase-activating protein 19 (ARHGAP19) (Gallus gallus (Chicken)).